Here is a 274-residue protein sequence, read N- to C-terminus: Hydroxyethylthiazole kinase (274 aa).

Met51 is a binding site for substrate. ATP contacts are provided by Arg127 and Ser173. Gly200 serves as a coordination point for substrate.

Belongs to the Thz kinase family. It depends on Mg(2+) as a cofactor.

The catalysed reaction is 5-(2-hydroxyethyl)-4-methylthiazole + ATP = 4-methyl-5-(2-phosphooxyethyl)-thiazole + ADP + H(+). It participates in cofactor biosynthesis; thiamine diphosphate biosynthesis; 4-methyl-5-(2-phosphoethyl)-thiazole from 5-(2-hydroxyethyl)-4-methylthiazole: step 1/1. In terms of biological role, catalyzes the phosphorylation of the hydroxyl group of 4-methyl-5-beta-hydroxyethylthiazole (THZ). The protein is Hydroxyethylthiazole kinase of Photobacterium profundum (strain SS9).